The chain runs to 177 residues: Calerythrin (177 aa).

EF-hand domains lie at 5–40 (IASD…IAEA), 45–90 (AGAA…NLIF), 100–134 (VLGP…ALGM), and 134–169 (MSKA…FHFG). Ca(2+) contacts are provided by Asp18, Asp20, Asn22, and Asp29. Residues Asp113, Asn115, Asp117, Gln119, Glu124, Asp147, Asn149, Asn151, Glu153, and Glu158 each contribute to the Ca(2+) site.

This chain is Calerythrin, found in Saccharopolyspora erythraea (Streptomyces erythraeus).